Here is a 325-residue protein sequence, read N- to C-terminus: MDVETVEKEAIEKLEKVSNAQELEQFRVEFLGKKGKITSLMKNLKNLPPEERPAYGKRVNELREKVERLFSEKKKQIEELLERERMEKMRVDVTLPGARRKVGHSHPVLKVMEEIERIFVSMGFDVVEGPEIETTWHNFDALNTPEWHPARDEHDSFYITDELLLRTHTSPVQIRTMLERKPPIAIISPGKVYRRDYDATHLPMFHQVEGLHVDRDLSVAHLKFTLEEFARRMFGKNARIRLRPSYFPFTEPSFEVDVYLSGYGWLEILGAGMVDPNVFLNVGYDPEEWTGYAFGMGVERISMLKYGITDIREFVRNDVRFLSSY.

E251 contributes to the Mg(2+) binding site.

The protein belongs to the class-II aminoacyl-tRNA synthetase family. Phe-tRNA synthetase alpha subunit type 1 subfamily. As to quaternary structure, tetramer of two alpha and two beta subunits. It depends on Mg(2+) as a cofactor.

The protein localises to the cytoplasm. The enzyme catalyses tRNA(Phe) + L-phenylalanine + ATP = L-phenylalanyl-tRNA(Phe) + AMP + diphosphate + H(+). The polypeptide is Phenylalanine--tRNA ligase alpha subunit (Thermotoga neapolitana (strain ATCC 49049 / DSM 4359 / NBRC 107923 / NS-E)).